A 72-amino-acid polypeptide reads, in one-letter code: UPF0270 protein YheU (72 aa).

The protein belongs to the UPF0270 family.

The sequence is that of UPF0270 protein YheU from Shigella flexneri serotype 5b (strain 8401).